A 179-amino-acid polypeptide reads, in one-letter code: Peptidyl-tRNA hydrolase (179 aa).

Y14 provides a ligand contact to tRNA. Residue H19 is the Proton acceptor of the active site. TRNA contacts are provided by Y61, N63, and N107.

The protein belongs to the PTH family. As to quaternary structure, monomer.

Its subcellular location is the cytoplasm. The catalysed reaction is an N-acyl-L-alpha-aminoacyl-tRNA + H2O = an N-acyl-L-amino acid + a tRNA + H(+). Hydrolyzes ribosome-free peptidyl-tRNAs (with 1 or more amino acids incorporated), which drop off the ribosome during protein synthesis, or as a result of ribosome stalling. In terms of biological role, catalyzes the release of premature peptidyl moieties from peptidyl-tRNA molecules trapped in stalled 50S ribosomal subunits, and thus maintains levels of free tRNAs and 50S ribosomes. In Campylobacter lari (strain RM2100 / D67 / ATCC BAA-1060), this protein is Peptidyl-tRNA hydrolase.